A 364-amino-acid polypeptide reads, in one-letter code: DNA replication and repair protein RecF (364 aa).

An ATP-binding site is contributed by 30–37; that stretch reads GNNAQGKT.

This sequence belongs to the RecF family.

It localises to the cytoplasm. Functionally, the RecF protein is involved in DNA metabolism; it is required for DNA replication and normal SOS inducibility. RecF binds preferentially to single-stranded, linear DNA. It also seems to bind ATP. This chain is DNA replication and repair protein RecF, found in Clostridium botulinum (strain Langeland / NCTC 10281 / Type F).